We begin with the raw amino-acid sequence, 241 residues long: Carboxy-S-adenosyl-L-methionine synthase (241 aa).

S-adenosyl-L-methionine contacts are provided by residues Tyr-38, 63–65 (GCS), 88–89 (DN), 116–117 (DI), Asn-131, and Arg-198.

This sequence belongs to the class I-like SAM-binding methyltransferase superfamily. Cx-SAM synthase family. Homodimer.

The catalysed reaction is prephenate + S-adenosyl-L-methionine = carboxy-S-adenosyl-L-methionine + 3-phenylpyruvate + H2O. In terms of biological role, catalyzes the conversion of S-adenosyl-L-methionine (SAM) to carboxy-S-adenosyl-L-methionine (Cx-SAM). This chain is Carboxy-S-adenosyl-L-methionine synthase, found in Actinobacillus pleuropneumoniae serotype 7 (strain AP76).